A 121-amino-acid polypeptide reads, in one-letter code: MTKEQIIGALKEMSVLELNEVVKACEEEFGVSAAAPVAVVGGAAAGAAAEEKSEFDVVLTNAGANKIKVIKAVRELTGLGLKEAKEIVDGAPKTLKEAVAKEEAEDMKAKLAEVGAEVELK.

This sequence belongs to the bacterial ribosomal protein bL12 family. As to quaternary structure, homodimer. Part of the ribosomal stalk of the 50S ribosomal subunit. Forms a multimeric L10(L12)X complex, where L10 forms an elongated spine to which 2 to 4 L12 dimers bind in a sequential fashion. Binds GTP-bound translation factors.

Functionally, forms part of the ribosomal stalk which helps the ribosome interact with GTP-bound translation factors. Is thus essential for accurate translation. The protein is Large ribosomal subunit protein bL12 of Clostridium perfringens (strain 13 / Type A).